Consider the following 293-residue polypeptide: 4-hydroxy-tetrahydrodipicolinate synthase (293 aa).

Position 45 (Thr45) interacts with pyruvate. Catalysis depends on Tyr133, which acts as the Proton donor/acceptor. Lys161 acts as the Schiff-base intermediate with substrate in catalysis. Ile203 is a pyruvate binding site.

This sequence belongs to the DapA family. As to quaternary structure, homotetramer; dimer of dimers.

The protein resides in the cytoplasm. The enzyme catalyses L-aspartate 4-semialdehyde + pyruvate = (2S,4S)-4-hydroxy-2,3,4,5-tetrahydrodipicolinate + H2O + H(+). Its pathway is amino-acid biosynthesis; L-lysine biosynthesis via DAP pathway; (S)-tetrahydrodipicolinate from L-aspartate: step 3/4. Functionally, catalyzes the condensation of (S)-aspartate-beta-semialdehyde [(S)-ASA] and pyruvate to 4-hydroxy-tetrahydrodipicolinate (HTPA). This is 4-hydroxy-tetrahydrodipicolinate synthase from Exiguobacterium sibiricum (strain DSM 17290 / CCUG 55495 / CIP 109462 / JCM 13490 / 255-15).